Consider the following 249-residue polypeptide: MILELDCGNSLIKWRVIDGGGGRSVAGGLADSDEALVEQLSLRRGLPVRACRLVSVRSEQETSQLIARLERLFPVSVLVAAPGRQLAGVRNGYLDYQRLGLDRWLALVAGHHLAQKACLVIDLGTAVTSDLVAANGTHLGGYICPGMSLMRSQLRTHTRRIRYDDTEARRAMGSLHPGQATAEAVERGCLLMLRGFVREQYAMACELLGADCEIFLTGGDAELVRDELARARIIPDLVFVGLALACPIE.

Aspartate 6 to lysine 13 is an ATP binding site. Residues tyrosine 93 and glycine 100–arginine 103 contribute to the substrate site. Aspartate 102 acts as the Proton acceptor in catalysis. A K(+)-binding site is contributed by aspartate 122. Position 125 (threonine 125) interacts with ATP. Threonine 181 is a substrate binding site.

This sequence belongs to the type III pantothenate kinase family. In terms of assembly, homodimer. NH4(+) is required as a cofactor. Requires K(+) as cofactor.

It localises to the cytoplasm. It catalyses the reaction (R)-pantothenate + ATP = (R)-4'-phosphopantothenate + ADP + H(+). The protein operates within cofactor biosynthesis; coenzyme A biosynthesis; CoA from (R)-pantothenate: step 1/5. Functionally, catalyzes the phosphorylation of pantothenate (Pan), the first step in CoA biosynthesis. This is Type III pantothenate kinase from Pseudomonas paraeruginosa (strain DSM 24068 / PA7) (Pseudomonas aeruginosa (strain PA7)).